The chain runs to 308 residues: Cytochrome b (308 aa).

The next 4 membrane-spanning stretches (helical) occupy residues 1-21 (FGSLLGICLVTQIITGLLLAT), 45-66 (WLIRNLHANGASFFFICIYLHI), 81-101 (WNTGVILLLTLMATAFVGYVL), and 146-166 (FFALHFLLPFVIAGITLVHLT). Heme b contacts are provided by His51 and His65. Residues His150 and His164 each coordinate heme b. Residue His169 participates in a ubiquinone binding. The next 3 membrane-spanning stretches (helical) occupy residues 194-214 (MKDILGFALLFIALVAMALFS), 256-276 (LGGVLALAASVLVLFLIPLLH), and 288-308 (LSQILFWTLVANLLVLTWVGS).

The protein belongs to the cytochrome b family. The cytochrome bc1 complex contains 11 subunits: 3 respiratory subunits (MT-CYB, CYC1 and UQCRFS1), 2 core proteins (UQCRC1 and UQCRC2) and 6 low-molecular weight proteins (UQCRH/QCR6, UQCRB/QCR7, UQCRQ/QCR8, UQCR10/QCR9, UQCR11/QCR10 and a cleavage product of UQCRFS1). This cytochrome bc1 complex then forms a dimer. Requires heme b as cofactor.

It is found in the mitochondrion inner membrane. Component of the ubiquinol-cytochrome c reductase complex (complex III or cytochrome b-c1 complex) that is part of the mitochondrial respiratory chain. The b-c1 complex mediates electron transfer from ubiquinol to cytochrome c. Contributes to the generation of a proton gradient across the mitochondrial membrane that is then used for ATP synthesis. The sequence is that of Cytochrome b (MT-CYB) from Amblyornis macgregoriae (Macgregor's bowerbird).